The primary structure comprises 222 residues: Holliday junction branch migration complex subunit RuvA (222 aa).

The domain I stretch occupies residues 1 to 67 (MISWLNGLKI…EDGSQLIGFL (67 aa)). The segment at 68 to 146 (NKLERDLFRK…DLIGSSLKKT (79 aa)) is domain II. The segment at 147 to 155 (NNHLELEYE) is flexible linker. Positions 155–222 (ETNVADEVRS…TLIRINTESG (68 aa)) are domain III.

This sequence belongs to the RuvA family. As to quaternary structure, homotetramer. Forms an RuvA(8)-RuvB(12)-Holliday junction (HJ) complex. HJ DNA is sandwiched between 2 RuvA tetramers; dsDNA enters through RuvA and exits via RuvB. An RuvB hexamer assembles on each DNA strand where it exits the tetramer. Each RuvB hexamer is contacted by two RuvA subunits (via domain III) on 2 adjacent RuvB subunits; this complex drives branch migration. In the full resolvosome a probable DNA-RuvA(4)-RuvB(12)-RuvC(2) complex forms which resolves the HJ.

The protein resides in the cytoplasm. Functionally, the RuvA-RuvB-RuvC complex processes Holliday junction (HJ) DNA during genetic recombination and DNA repair, while the RuvA-RuvB complex plays an important role in the rescue of blocked DNA replication forks via replication fork reversal (RFR). RuvA specifically binds to HJ cruciform DNA, conferring on it an open structure. The RuvB hexamer acts as an ATP-dependent pump, pulling dsDNA into and through the RuvAB complex. HJ branch migration allows RuvC to scan DNA until it finds its consensus sequence, where it cleaves and resolves the cruciform DNA. In Prochlorococcus marinus (strain SARG / CCMP1375 / SS120), this protein is Holliday junction branch migration complex subunit RuvA.